A 525-amino-acid chain; its full sequence is Potassium voltage-gated channel subfamily A member 3 (525 aa).

The segment at 1 to 23 (MTVVPGDHLLEPEAAGGGGGDPP) is disordered. Topologically, residues 1 to 184 (MTVVPGDHLL…EYPESSGPAR (184 aa)) are cytoplasmic. The helical transmembrane segment at 185-203 (GIAIVSVLVILISIVIFCL) threads the bilayer. At 204–244 (ETLPEFRDEKDYPASPSQDVFEAANNSTSGASSGASSFSDP) the chain is on the extracellular side. N-linked (GlcNAc...) asparagine glycosylation is present at Asn-229. Residues 245 to 266 (FFVVETLCIIWFSFELLVRFFA) traverse the membrane as a helical segment. The S-palmitoyl cysteine moiety is linked to residue Cys-267. The Cytoplasmic portion of the chain corresponds to 267–277 (CPSKATFSRNI). The chain crosses the membrane as a helical span at residues 278–298 (MNLIDIVAIIPYFITLGTELA). The Extracellular portion of the chain corresponds to 299–312 (ERQGNGQQAMSLAI). Residues 313 to 331 (LRVIRLVRVFRIFKLSRHS) traverse the membrane as a helical; Voltage-sensor segment. Over 332–347 (KGLQILGQTLKASMRE) the chain is Cytoplasmic. A helical membrane pass occupies residues 348-367 (LGLLIFFLFIGVILFSSAVY). Over 368–408 (FAEADDPSSGFNSIPDAFWWAVVTMTTVGYGDMHPVTIGGK) the chain is Extracellular. The Selectivity filter motif lies at 394–399 (TVGYGD). The chain crosses the membrane as a helical span at residues 409 to 431 (IVGSLCAIAGVLTIALPVPVIVS). Residues 432 to 525 (NFNYFYHRET…VNIKKIFTDV (94 aa)) are Cytoplasmic-facing. The interaction with KCNE4 stretch occupies residues 432-525 (NFNYFYHRET…VNIKKIFTDV (94 aa)). Tyr-449 carries the post-translational modification Phosphotyrosine. Residue Ser-470 is modified to Phosphoserine; by PKA. The PDZ-binding signature appears at 523-525 (TDV).

It belongs to the potassium channel family. A (Shaker) (TC 1.A.1.2) subfamily. Kv1.3/KCNA3 sub-subfamily. Homotetramer. Forms heterooligomers with KCNE4 which inhibits KCNA3 activity by impairing localization to the cell membrane. The stoichiometry of KCNA3 and KCNE4 in the heterooligomers are 4:1, 4:2, 4:3 or 4:4 respectively. Increasing the number of KCNE4 subunits steadily slows the activation KCNA3 and decreases its abundance at the cell membrane. However, a single subunit of KCNE4 is sufficient for the cooperative enhancement of the inactivating function of the channel. Interacts with SEC24D; this interaction is reduced in the presence of KCNE4. Interacts with DLG1, DLG2 and DLG4 via their PDZ domains. In terms of processing, phosphorylation on Tyr-449 inhibits its channel activity. Post-translationally, N-glycosylation promotes the cell surface expression.

The protein resides in the cell membrane. It catalyses the reaction K(+)(in) = K(+)(out). Its activity is regulated as follows. Activity is up-regulated by JAK2. In terms of biological role, mediates the voltage-dependent potassium ion permeability of excitable membranes. Assuming opened or closed conformations in response to the voltage difference across the membrane, the protein forms a potassium-selective channel through which potassium ions may pass in accordance with their electrochemical gradient. This is Potassium voltage-gated channel subfamily A member 3 (Kcna3) from Rattus norvegicus (Rat).